Reading from the N-terminus, the 292-residue chain is GTP cyclohydrolase FolE2 (292 aa).

This sequence belongs to the GTP cyclohydrolase IV family.

The enzyme catalyses GTP + H2O = 7,8-dihydroneopterin 3'-triphosphate + formate + H(+). It participates in cofactor biosynthesis; 7,8-dihydroneopterin triphosphate biosynthesis; 7,8-dihydroneopterin triphosphate from GTP: step 1/1. In terms of biological role, converts GTP to 7,8-dihydroneopterin triphosphate. The polypeptide is GTP cyclohydrolase FolE2 (Staphylococcus aureus (strain Mu50 / ATCC 700699)).